The chain runs to 264 residues: Hemin import ATP-binding protein HmuV (264 aa).

The ABC transporter domain occupies I2–A241. G34–T41 contacts ATP.

Belongs to the ABC transporter superfamily. Heme (hemin) importer (TC 3.A.1.14.5) family. The complex is composed of two ATP-binding proteins (HmuV), two transmembrane proteins (HmuU) and a solute-binding protein (HmuT).

It localises to the cell inner membrane. Functionally, part of the ABC transporter complex HmuTUV involved in hemin import. Responsible for energy coupling to the transport system. The chain is Hemin import ATP-binding protein HmuV from Rhizobium etli (strain ATCC 51251 / DSM 11541 / JCM 21823 / NBRC 15573 / CFN 42).